A 298-amino-acid chain; its full sequence is Inosose dehydratase (298 aa).

Belongs to the IolE/MocC family. Glutathione serves as cofactor. Requires Co(2+) as cofactor. It depends on Mn(2+) as a cofactor.

It catalyses the reaction scyllo-inosose = 3D-3,5/4-trihydroxycyclohexane-1,2-dione + H2O. Functionally, catalyzes the dehydration of inosose (2-keto-myo-inositol, 2KMI or 2,4,6/3,5-pentahydroxycyclohexanone) to 3D-(3,5/4)-trihydroxycyclohexane-1,2-dione (D-2,3-diketo-4-deoxy-epi-inositol). In Histophilus somni (strain 129Pt) (Haemophilus somnus), this protein is Inosose dehydratase.